The primary structure comprises 354 residues: Glutamine synthetase (354 aa).

Residues 22-101 enclose the GS beta-grasp domain; that stretch reads IQAEYVWVDG…VLAETYNSDG (80 aa). The 247-residue stretch at 108 to 354 folds into the GS catalytic domain; that stretch reads FRHHAAKVME…IIVETTLLNA (247 aa).

The protein belongs to the glutamine synthetase family. In terms of assembly, homooctamer.

It is found in the cytoplasm. It carries out the reaction L-glutamate + NH4(+) + ATP = L-glutamine + ADP + phosphate + H(+). The polypeptide is Glutamine synthetase (GLN1) (Hebeloma cylindrosporum).